A 428-amino-acid polypeptide reads, in one-letter code: Cytokine-dependent hematopoietic cell linker (428 aa).

Residues Met-1–Phe-22 are disordered. Tyr-69 and Tyr-96 each carry phosphotyrosine; by LYN. Disordered regions lie at residues Asp-135–Arg-198 and Ser-244–Cys-271. The mediates interaction with PLCG1; essential for BCR signaling; involved in restoration of BCR-induced calcium response and ERK2 and JNK2 activation in BLNK-deficient cells expressing LAT stretch occupies residues Pro-159 to Arg-164. Residues Pro-178–Pro-180 are mediates interaction with LAT, GRB2, and FGR; involved in translocation to the glycolipid-enriched microdomain and restoration of BCR-induced calcium response in BLNK-deficient DT40 cells expressing LAT. A compositionally biased stretch (low complexity) spans Ser-244–Ser-253. Residues Trp-309–Leu-419 form the SH2 domain.

As to quaternary structure, when phosphorylated, interacts with PLCG1, PLCG2, GRB2, VAV and LAT. Interacts with LBR and AGO2. Interacts with FGR. Part of a complex consisting of CLNK, SKAP1 and FYB1. Interacts (via SH2 domain) with FYB1; this interaction allows SKAP1 and FYB1 to promote tyrosine phosphorylation of CLNK by LYN. Interacts (via SH2 domain) with MAP4K1. Tyrosine-phosphorylated upon BCR cross-linking. Tyrosine phosphorylation at both Tyr-69 and Tyr-96 are required for BCR-induced calcium response and are essential to restore PLCG2-mediated signaling in BLNK-deficient DT40 cells, but this phosphorylation is dispensable in cells expressing LAT. Interacts with the SH2 domain of PLCG1 via phosphorylated Tyr-96. Tyrosine phosphorylation is increased when complexed with SKAP1 and FYB1.

The protein localises to the cytoplasm. In terms of biological role, an adapter protein which plays a role in the regulation of immunoreceptor signaling, including PLC-gamma-mediated B-cell antigen receptor (BCR) signaling and FC-epsilon R1-mediated mast cell degranulation. Together with FGR, it acts as a negative regulator of natural killer cell-activating receptors and inhibits interferon-gamma production. Acts as a positive regulator of both T-cell receptor and natural killer T (NKT) cell receptor signaling in CD4-positive NKT cells. Together with MAP4K1, it enhances CD3-triggered activation of T-cells and subsequent IL2 production. May be involved in tumor necrosis factor induced cell death by promoting reactive oxidative species generation, and MLKL oligomerization, ultimately leading to necrosis. Involved in phosphorylation of LAT. May be involved in high affinity immunoglobulin epsilon receptor signaling in mast cells. The sequence is that of Cytokine-dependent hematopoietic cell linker (CLNK) from Homo sapiens (Human).